The chain runs to 152 residues: Mid1-interacting protein 1A (152 aa).

Positions 87–105 (SEDQRRKKDTSASEPVRTE) are enriched in basic and acidic residues. The disordered stretch occupies residues 87 to 109 (SEDQRRKKDTSASEPVRTEEESD).

It belongs to the SPOT14 family. In terms of tissue distribution, expressed for a short period in the cells that will produce the enveloping layer (EVL).

Its subcellular location is the nucleus. It is found in the cytoplasm. The protein localises to the cytoskeleton. Involved in stabilization of microtubules. May play a role in the regulation of lipogenesis. This chain is Mid1-interacting protein 1A (mid1ip1a), found in Danio rerio (Zebrafish).